Here is a 2383-residue protein sequence, read N- to C-terminus: Highly reducing polyketide synthase SAT13 (2383 aa).

In terms of domain architecture, Ketosynthase family 3 (KS3) spans 6–433 (PVPLAIVGIA…GTNAHAVLER (428 aa)). Active-site for beta-ketoacyl synthase activity residues include Cys-180, His-315, and His-355. The segment at 536-828 (FIFTGQGAQW…IGPHSALAGP (293 aa)) is malonyl-CoA:ACP transacylase (MAT) domain. Residue Ser-626 is the For malonyltransferase activity of the active site. Residues 922-1062 (HDLLGLRMTE…GNIVVVFKTS (141 aa)) are N-terminal hotdog fold. Positions 922-1239 (HDLLGLRMTE…GMELRSFVAR (318 aa)) are dehydratase (DH) domain. Positions 922-1242 (HDLLGLRMTE…LRSFVARDSN (321 aa)) constitute a PKS/mFAS DH domain. The active-site Proton acceptor; for dehydratase activity is the His-954. The tract at residues 1087–1242 (GKLTHAGQLY…LRSFVARDSN (156 aa)) is C-terminal hotdog fold. The active-site Proton donor; for dehydratase activity is Asp-1152. Positions 1669 to 1977 (DGQNRLVFVE…KQGSMKKCVL (309 aa)) are enoylreductase (ER) domain. Residues 2001–2184 (ATYVVAGGLG…MSLNIGGIKD (184 aa)) form a catalytic ketoreductase (KRc) domain region. A Carrier domain is found at 2287-2364 (EISEFVARSI…DLAQKVVSRS (78 aa)). Residue Ser-2324 is modified to O-(pantetheine 4'-phosphoryl)serine.

It participates in mycotoxin biosynthesis. Its function is as follows. Highly reducing polyketide synthase; part of the satratoxin SC2 cluster involved in the biosynthesis of satratoxins, trichothecene mycotoxins that are associated with human food poisonings. Satratoxins are suggested to be made by products of multiple gene clusters (SC1, SC2 and SC3) that encode 21 proteins in all, including polyketide synthases, acetyltransferases, and other enzymes expected to modify the trichothecene skeleton. SC1 encodes 10 proteins, SAT1 to SAT10. The largest are SAT8, which encodes a putative polyketide synthase (PKS) with a conventional non-reducing architecture, and SAT10, a putative protein containing four ankyrin repeats and thus may be involved in protein scaffolding. The putative short-chain reductase SAT3 may assist the PKS in some capacity. SAT6 contains a secretory lipase domain and acts probably as a trichothecene esterase. SAT5 encodes a putative acetyltransferase, and so, with SAT6, may affect endogenous protection from toxicity. The probable transcription factor SAT9 may regulate the expression of the SC1 cluster. SC2 encodes proteins SAT11 to SAT16, the largest of which encodes the putative reducing PKS SAT13. SAT11 is a cytochrome P450 monooxygenase, while SAT14 and SAT16 are probable acetyltransferases. The SC2 cluster may be regulated by the transcription factor SAT15. SC3 is a small cluster that encodes 5 proteins, SAT17 to SAT21. SAT21 is a putative MFS-type transporter which may have a role in exporting secondary metabolites. The four other proteins putatively encoded in SC3 include the taurine hydroxylase-like protein SAT17, the O-methyltransferase SAT18, the acetyltransferase SAT19, and the Cys6-type zinc finger SAT20, the latter being probably involved in regulation of SC3 expression. The polypeptide is Highly reducing polyketide synthase SAT13 (Stachybotrys chartarum (strain CBS 109288 / IBT 7711) (Toxic black mold)).